We begin with the raw amino-acid sequence, 203 residues long: Protein GrpE (203 aa).

The span at 1–10 (MSNESIKAEQ) shows a compositional bias: basic and acidic residues. Residues 1–20 (MSNESIKAEQDLIQEGVESE) form a disordered region.

Belongs to the GrpE family. Homodimer.

It is found in the cytoplasm. Participates actively in the response to hyperosmotic and heat shock by preventing the aggregation of stress-denatured proteins, in association with DnaK and GrpE. It is the nucleotide exchange factor for DnaK and may function as a thermosensor. Unfolded proteins bind initially to DnaJ; upon interaction with the DnaJ-bound protein, DnaK hydrolyzes its bound ATP, resulting in the formation of a stable complex. GrpE releases ADP from DnaK; ATP binding to DnaK triggers the release of the substrate protein, thus completing the reaction cycle. Several rounds of ATP-dependent interactions between DnaJ, DnaK and GrpE are required for fully efficient folding. The sequence is that of Protein GrpE from Shewanella sp. (strain MR-4).